The sequence spans 154 residues: Endoribonuclease YbeY (154 aa).

3 residues coordinate Zn(2+): histidine 116, histidine 120, and histidine 126.

This sequence belongs to the endoribonuclease YbeY family. Zn(2+) serves as cofactor.

It localises to the cytoplasm. Its function is as follows. Single strand-specific metallo-endoribonuclease involved in late-stage 70S ribosome quality control and in maturation of the 3' terminus of the 16S rRNA. This chain is Endoribonuclease YbeY, found in Buchnera aphidicola subsp. Baizongia pistaciae (strain Bp).